A 231-amino-acid polypeptide reads, in one-letter code: uncharacterized protein (231 aa).

The helical transmembrane segment at 86 to 106 (LIILFVIGLIITIIGLLMYEP) threads the bilayer.

The protein localises to the membrane. This is an uncharacterized protein from Methanocaldococcus jannaschii (strain ATCC 43067 / DSM 2661 / JAL-1 / JCM 10045 / NBRC 100440) (Methanococcus jannaschii).